A 380-amino-acid chain; its full sequence is Cyclohex-1-ene-1-carbonyl-CoA dehydrogenase (380 aa).

Aspartate 91 serves as the catalytic Proton acceptor. Residues leucine 122, alanine 124, threonine 125, serine 131, and threonine 157 each contribute to the FAD site. Serine 131 is a cyclohex-1-ene-1-carbonyl-CoA binding site. Serine 131 lines the cyclohexa-1,5-diene-1-carbonyl-CoA pocket. Positions 178, 242, and 363 each coordinate cyclohex-1-ene-1-carbonyl-CoA. Residues lysine 178, arginine 242, and threonine 363 each coordinate cyclohexa-1,5-diene-1-carbonyl-CoA. Positions 365 and 367 each coordinate FAD. Arginine 375 lines the cyclohex-1-ene-1-carbonyl-CoA pocket. Arginine 375 contacts cyclohexa-1,5-diene-1-carbonyl-CoA.

The protein belongs to the acyl-CoA dehydrogenase family. In terms of assembly, homotetramer. FAD is required as a cofactor.

It catalyses the reaction cyclohex-1-ene-1-carbonyl-CoA + oxidized [electron-transfer flavoprotein] + H(+) = cyclohexa-1,5-diene-1-carbonyl-CoA + reduced [electron-transfer flavoprotein]. Acyl-CoA dehydrogenase involved in the anaerobic degradation of cyclohexane carboxylic acid (CHC). Catalyzes the 1,4-dehydrogenation at C3 and C6 of cyclohex-1-ene-1-carbonyl-CoA (CHeneCoA or Ch1CoA) to cyclohexa-1,5-diene-1-carbonyl-CoA (CHdieneCoA or Ch1,5CoA). Also able to catalyze, at a lower rate, the dehydrogenation at C3 and C4 of CHdieneCoA to benzoyl-CoA. The protein is Cyclohex-1-ene-1-carbonyl-CoA dehydrogenase of Geobacter metallireducens (strain ATCC 53774 / DSM 7210 / GS-15).